A 261-amino-acid chain; its full sequence is Glutamate racemase (261 aa).

Residues 12–13 and 44–45 each bind substrate; these read DS and YG. Cysteine 76 acts as the Proton donor/acceptor in catalysis. Residue 77–78 participates in substrate binding; that stretch reads NT. Residue cysteine 180 is the Proton donor/acceptor of the active site. 181–182 lines the substrate pocket; that stretch reads TH.

It belongs to the aspartate/glutamate racemases family.

The catalysed reaction is L-glutamate = D-glutamate. Its pathway is cell wall biogenesis; peptidoglycan biosynthesis. Its function is as follows. Provides the (R)-glutamate required for cell wall biosynthesis. The polypeptide is Glutamate racemase (Borreliella burgdorferi (strain ATCC 35210 / DSM 4680 / CIP 102532 / B31) (Borrelia burgdorferi)).